The chain runs to 698 residues: Effector protein AvrPphDPgy (698 aa).

The segment covering 1–15 (MNPLRSIQHNITTPP) has biased composition (polar residues). 2 disordered regions span residues 1-36 (MNPL…HPKR) and 171-200 (VDSS…DSDS). The segment covering 172–181 (DSSSPLLSSP) has biased composition (low complexity).

Its subcellular location is the secreted. Its function is as follows. Effector protein involved in non-host recognition. The chain is Effector protein AvrPphDPgy (avrPphDPgy) from Pseudomonas savastanoi pv. glycinea (Pseudomonas syringae pv. glycinea).